The chain runs to 203 residues: Urease accessory protein UreG (203 aa).

Residue 14–21 participates in GTP binding; sequence GPVGSGKT.

This sequence belongs to the SIMIBI class G3E GTPase family. UreG subfamily. Homodimer. UreD, UreF and UreG form a complex that acts as a GTP-hydrolysis-dependent molecular chaperone, activating the urease apoprotein by helping to assemble the nickel containing metallocenter of UreC. The UreE protein probably delivers the nickel.

It is found in the cytoplasm. Facilitates the functional incorporation of the urease nickel metallocenter. This process requires GTP hydrolysis, probably effectuated by UreG. The protein is Urease accessory protein UreG of Rhizobium etli (strain CIAT 652).